The chain runs to 770 residues: Probable methyltransferase PMT25 (770 aa).

Residues 1–17 lie on the Cytoplasmic side of the membrane; the sequence is MAMGKYSRVDGKKSSSY. Residues 18 to 38 form a helical; Signal-anchor for type II membrane protein membrane-spanning segment; that stretch reads GLTITIVLLLSLCLVGTWMFM. Over 39-770 the chain is Lumenal; that stretch reads SSWSAPADSA…ETETIKSAIA (732 aa). The interval 44 to 238 is disordered; the sequence is PADSAGYSST…SSISKDQSSY (195 aa). Positions 55 to 79 are enriched in basic and acidic residues; that stretch reads TAKDVSKNDLRKEEGDRDPKNFSDE. N75 and N107 each carry an N-linked (GlcNAc...) asparagine glycan. Residues 92–109 show a composition bias toward polar residues; it reads QVKTDSENSAEGNQVNES. Composition is skewed to basic and acidic residues over residues 110-124 and 131-177; these read SGEK…KESD and DGEK…KAEE. N-linked (GlcNAc...) asparagine glycosylation is found at N163 and N178. Composition is skewed to polar residues over residues 205 to 220 and 227 to 238; these read ESST…LVES and QQSSISKDQSSY. Residues N244 and N363 are each glycosylated (N-linked (GlcNAc...) asparagine).

Belongs to the methyltransferase superfamily.

Its subcellular location is the golgi apparatus membrane. The protein is Probable methyltransferase PMT25 of Arabidopsis thaliana (Mouse-ear cress).